The chain runs to 447 residues: Protein mab-21-like 4 (447 aa).

The protein is Protein mab-21-like 4 of Homo sapiens (Human).